We begin with the raw amino-acid sequence, 148 residues long: Large ribosomal subunit protein uL11 (148 aa).

A disordered region spans residues 89-108; sequence EKKKGSGAHKPGKEKVGQVT.

It belongs to the universal ribosomal protein uL11 family. As to quaternary structure, part of the ribosomal stalk of the 50S ribosomal subunit. Interacts with L10 and the large rRNA to form the base of the stalk. L10 forms an elongated spine to which L12 dimers bind in a sequential fashion forming a multimeric L10(L12)X complex. In terms of processing, one or more lysine residues are methylated.

In terms of biological role, forms part of the ribosomal stalk which helps the ribosome interact with GTP-bound translation factors. The chain is Large ribosomal subunit protein uL11 from Anaeromyxobacter sp. (strain Fw109-5).